Here is a 271-residue protein sequence, read N- to C-terminus: MQQEIIQVTGVKPVIDAEEEIKQRVQFLKEYLVHTGAKGLVLGISGGQDSSLAGRLCQIAVEELRSETNRDYQFYAVRLPYGQQQDESDAQLALSFIRPDHALRVDIKPAVAASMASFEQATGDVLSDFSKGNTKARERMKVQYDIAAHYGCLVVGTDHAAEFVTGFYTKHGDGACDLTPLTGLNKRQGKQLLRQLQAPEGLIEKVPTADLEDNQPGLPDEQALGMTYNEIDDYLEGKTISAESQAKLEAQYKRVGHKHHMPVSPLDTWWK.

43–50 (GISGGQDS) contributes to the ATP binding site. Residue Asp49 participates in Mg(2+) binding. Arg137 lines the deamido-NAD(+) pocket. ATP is bound at residue Thr157. Glu162 lines the Mg(2+) pocket. Lys170 and Asp177 together coordinate deamido-NAD(+). The ATP site is built by Lys186 and Thr208. A deamido-NAD(+)-binding site is contributed by 257 to 258 (HK).

This sequence belongs to the NAD synthetase family. Homodimer.

The enzyme catalyses deamido-NAD(+) + NH4(+) + ATP = AMP + diphosphate + NAD(+) + H(+). It participates in cofactor biosynthesis; NAD(+) biosynthesis; NAD(+) from deamido-NAD(+) (ammonia route): step 1/1. In terms of biological role, catalyzes the ATP-dependent amidation of deamido-NAD to form NAD. Uses ammonia as a nitrogen source. The sequence is that of NH(3)-dependent NAD(+) synthetase from Exiguobacterium sibiricum (strain DSM 17290 / CCUG 55495 / CIP 109462 / JCM 13490 / 255-15).